The sequence spans 62 residues: Large ribosomal subunit protein bL28 (62 aa).

This sequence belongs to the bacterial ribosomal protein bL28 family.

The chain is Large ribosomal subunit protein bL28 from Streptococcus equi subsp. equi (strain 4047).